Here is a 362-residue protein sequence, read N- to C-terminus: 3-dehydroquinate synthase (362 aa).

NAD(+) is bound by residues 71–76 (DGEQYK), 105–109 (GVVGD), 129–130 (TT), Lys142, Lys151, and 169–172 (CLKT). Glu184, His247, and His264 together coordinate Zn(2+).

It belongs to the sugar phosphate cyclases superfamily. Dehydroquinate synthase family. It depends on NAD(+) as a cofactor. Requires Co(2+) as cofactor. Zn(2+) is required as a cofactor.

Its subcellular location is the cytoplasm. The catalysed reaction is 7-phospho-2-dehydro-3-deoxy-D-arabino-heptonate = 3-dehydroquinate + phosphate. Its pathway is metabolic intermediate biosynthesis; chorismate biosynthesis; chorismate from D-erythrose 4-phosphate and phosphoenolpyruvate: step 2/7. Its function is as follows. Catalyzes the conversion of 3-deoxy-D-arabino-heptulosonate 7-phosphate (DAHP) to dehydroquinate (DHQ). The polypeptide is 3-dehydroquinate synthase (Shigella flexneri).